A 216-amino-acid polypeptide reads, in one-letter code: Uracil phosphoribosyltransferase (216 aa).

5-phospho-alpha-D-ribose 1-diphosphate-binding positions include arginine 85, arginine 110, and 135 to 143 (DPMVATGYS). Uracil contacts are provided by residues isoleucine 200 and 205–207 (GDA). Aspartate 206 is a binding site for 5-phospho-alpha-D-ribose 1-diphosphate.

This sequence belongs to the UPRTase family. It depends on Mg(2+) as a cofactor.

It catalyses the reaction UMP + diphosphate = 5-phospho-alpha-D-ribose 1-diphosphate + uracil. The protein operates within pyrimidine metabolism; UMP biosynthesis via salvage pathway; UMP from uracil: step 1/1. With respect to regulation, allosterically activated by GTP. Its function is as follows. Catalyzes the conversion of uracil and 5-phospho-alpha-D-ribose 1-diphosphate (PRPP) to UMP and diphosphate. This is Uracil phosphoribosyltransferase from Burkholderia multivorans (strain ATCC 17616 / 249).